The chain runs to 148 residues: Hut operon positive regulatory protein (148 aa).

The protein belongs to the HutP family. In terms of assembly, homohexamer.

Its function is as follows. Antiterminator that binds to cis-acting regulatory sequences on the mRNA in the presence of histidine, thereby suppressing transcription termination and activating the hut operon for histidine utilization. The chain is Hut operon positive regulatory protein from Bacillus velezensis (strain DSM 23117 / BGSC 10A6 / LMG 26770 / FZB42) (Bacillus amyloliquefaciens subsp. plantarum).